A 475-amino-acid chain; its full sequence is Enolase (475 aa).

Position 179 (Gln-179) interacts with (2R)-2-phosphoglycerate. The Proton donor role is filled by Glu-221. 3 residues coordinate Mg(2+): Asp-258, Glu-312, and Asp-339. Lys-364, Arg-393, Ser-394, and Lys-415 together coordinate (2R)-2-phosphoglycerate. The Proton acceptor role is filled by Lys-364. The disordered stretch occupies residues 454–475; that stretch reads STPAATPKKSPAKKTTKAKSKK. Basic residues predominate over residues 463 to 475; the sequence is SPAKKTTKAKSKK.

The protein belongs to the enolase family. Mg(2+) serves as cofactor.

It localises to the cell membrane. Its subcellular location is the cytoplasm. The protein resides in the secreted. The protein localises to the cell surface. The enzyme catalyses (2R)-2-phosphoglycerate = phosphoenolpyruvate + H2O. Its pathway is carbohydrate degradation; glycolysis; pyruvate from D-glyceraldehyde 3-phosphate: step 4/5. Functionally, catalyzes the reversible conversion of 2-phosphoglycerate (2-PG) into phosphoenolpyruvate (PEP). It is essential for the degradation of carbohydrates via glycolysis. Its function is as follows. 'Moonlights' as a plasminogen receptor. Binds host (chicken) plasminogen; enolase antiserum inhibits M.gallisepticum adherence to chicken embryo fibroblasts. The polypeptide is Enolase (Mycoplasmoides gallisepticum (strain R(low / passage 15 / clone 2)) (Mycoplasma gallisepticum)).